The following is a 47-amino-acid chain: MPEEVQTQDQPMETFAVQTFAFQAEIAQLMSLIYESLTDPSKLDSGK.

The protein belongs to the heat shock protein 90 family. Homodimer.

It is found in the cytoplasm. Functionally, putative molecular chaperone that may promote the maturation, structural maintenance and proper regulation of specific target proteins. This Oryctolagus cuniculus (Rabbit) protein is Heat shock protein HSP 90.